Consider the following 1219-residue polypeptide: Myosin-5 (1219 aa).

Positions 1-12 (MAILKRGARKKV) are enriched in basic residues. The disordered stretch occupies residues 1-20 (MAILKRGARKKVHQEPAKRS). One can recognise a Myosin motor domain in the interval 36–715 (VGVSDLTLLS…TLFALEHMRD (680 aa)). 129 to 136 (GESGAGKT) is a binding site for ATP. S357 carries the phosphoserine modification. Y359 carries the phosphotyrosine modification. The actin-binding stretch occupies residues 404–486 (SIGILDIYGF…PGIFAAMNDS (83 aa)). IQ domains are found at residues 719-739 (HNMAARIQRAWRRFLQRRIDA) and 740-765 (ATKIQRTIRERKEGNKYEKLRDYGTK). Residues 771–961 (KERRSMSLLG…TISVRRGNPP (191 aa)) form the TH1 domain. The residue at position 777 (S777) is a Phosphoserine. Residues 951-964 (STISVRRGNPPNSQ) show a composition bias toward polar residues. Disordered stretches follow at residues 951 to 1106 (STIS…SELP) and 1139 to 1167 (TAYMKPHSGNNNIPTPPQNRDVPKPVLNS). Residues 974–984 (SISSGYHASSS) show a composition bias toward low complexity. The residue at position 992 (S992) is a Phosphoserine. Residues 1030-1041 (NPASTLTASQSN) are compositionally biased toward polar residues. Residues 1048–1063 (TAATRATPAATPAAAA) show a composition bias toward low complexity. Pro residues predominate over residues 1072–1083 (IPPPPPPPPPSS). The region spanning 1085–1147 (PKEPMFEAAY…PTAYMKPHSG (63 aa)) is the SH3 domain. The residue at position 1205 (S1205) is a Phosphoserine.

Belongs to the TRAFAC class myosin-kinesin ATPase superfamily. Myosin family. In terms of assembly, interacts (via myosin motor domain) with SHE4; this interaction is important for proper localization and may regulate the interaction of the motor domain with actin. Interacts (via SH3 domain) with VRP1; this interaction is required for localization to sites of polarized growth and may regulate the interaction of the tail domain with actin. Interacts (via SH3 domain) with PAN1; this interaction is important for late stages of endocytopsis. Interacts (via SH3 domain) with BBC1 and LAS17. Interacts (via C-terminal acidic tail) with ARC19 and ARC40; ARC19 and ARC40 are Arp2/3 complex subunits. Interacts with BZZ1, PKH1, PKH2, YPK1 and YPK2. In terms of processing, phosphorylation of the TEDS site (Ser-357) is required for the polarization of the actin cytoskeleton and for ligand-induced, but not for constitutive internalization of STE2. Phosphorylation probably activates the myosin-I ATPase activity. Ser-357 is phosphorylated by YPK2 in vitro.

The protein localises to the cytoplasm. It localises to the cytoskeleton. The protein resides in the actin patch. Its function is as follows. One of two redundant type-I myosins implicated in the organization of the actin cytoskeleton. Required for proper actin cytoskeleton polarization and for the internalization step in endocytosis. At the cell cortex, assembles in patch-like structures together with proteins from the actin-polymerizing machinery and promotes actin assembly. Functions redundantly with LAS17 as actin nucleation-promoting factor (NPF) for the Arp2/3 complex. Motor domain phosphorylation by PAK kinases CLA4 and STE20 promotes CDC42-regulated actin assembly. Functions together with the NPF PAN1 in late stages of endocytosis. Motor domain phosphorylation by PDK1 kinases PKH1 and PKH2, and by SGK kinases YPK1 and YPK2, promotes ligand-induced, but not constitutive endocytosis of the G protein-coupled receptor STE2. This chain is Myosin-5 (MYO5), found in Saccharomyces cerevisiae (strain YJM789) (Baker's yeast).